The primary structure comprises 433 residues: Ornithine decarboxylase 1B, chloroplastic (433 aa).

Lys-96 carries the post-translational modification N6-(pyridoxal phosphate)lysine. Residues Ser-228, Gly-266, and 299–302 each bind pyridoxal 5'-phosphate; that span reads EPGR. A substrate-binding site is contributed by 342–343; sequence YD. Cys-378 (proton donor; shared with dimeric partner) is an active-site residue. Position 379 (Asp-379) interacts with substrate. Tyr-407 lines the pyridoxal 5'-phosphate pocket.

This sequence belongs to the Orn/Lys/Arg decarboxylase class-II family. Homodimer. Only the dimer is catalytically active, as the active sites are constructed of residues from both monomers. Pyridoxal 5'-phosphate is required as a cofactor.

The protein resides in the plastid. Its subcellular location is the chloroplast. It carries out the reaction L-ornithine + H(+) = putrescine + CO2. It functions in the pathway alkaloid biosynthesis; nicotine biosynthesis. Its pathway is amine and polyamine biosynthesis; putrescine biosynthesis via L-ornithine pathway; putrescine from L-ornithine: step 1/1. In terms of biological role, involved in the biosynthesis of pyridine alkaloid natural products, leading mainly to the production of anabasine, anatabine, nicotine and nornicotine, effective deterrents against herbivores with antiparasitic and pesticide properties (neurotoxins); nornicotine serves as the precursor in the synthesis of the carcinogen compound N'-nitrosonornicotine (NNN). Catalyzes the first and rate-limiting step of polyamine biosynthesis that converts ornithine into putrescine, which is the precursor for the polyamines, spermidine and spermine. Polyamines are essential for cell proliferation and are implicated in cellular processes, ranging from DNA replication to apoptosis. This chain is Ornithine decarboxylase 1B, chloroplastic, found in Nicotiana tabacum (Common tobacco).